Reading from the N-terminus, the 574-residue chain is MSSGIILLIVAIVLLVIIAYLVGVIIRKRNDSLITSLEERKQALFALPVNDEIEEVKSLHLIGQSQTSFREWNQKWVDLTVNSFADIENHIFEAENLNDTFNFIRAKHEINSVESQLNLVEEDIASIREALNILKEQEEKNSARVTHALDLYEKLQASISENEDNFGSTMPEIDKQMKNIETEFSQFVALNSSGDPVEASEVLDRAEEHTIALGQITEQIPAIVAKLEDDFPDQLDDLETGYRRLLEENYHFPEKNIEARFQEIRESIRANSSELVTLDLDRAREENTHIQERIDSLYEVFEREIAAYKVAAKNSKMLPRYLEHVKRNNEQLKDEIARLSRKYILSETESLTVKAFEKDIKEIEDSTLAVAEQFGLQEKPFSELQVTFERSIKTLTNVESGQMDVFAAVKDIEKIESQARHNLDVYVTQLHMIKRYMEKRHLPGIPQDFLSAFFTTSSQLEALMDELSRGRINIEAVSRLSEVATVAIANLEDLTYQVVQNATLTEQLLQYSNRYRSFEAGVQSSFEHALRLFEVENDYQASFDEISYALETVEPGVTDRFVNSYEKTREHIRF.

The Extracellular segment spans residues 1 to 7; sequence MSSGIIL. Residues 8–26 traverse the membrane as a helical segment; sequence LIVAIVLLVIIAYLVGVII. Topologically, residues 27-574 are cytoplasmic; that stretch reads RKRNDSLITS…YEKTREHIRF (548 aa). Coiled-coil stretches lie at residues 102 to 141, 274 to 350, and 459 to 520; these read NFIRAKHEINSVESQLNLVEEDIASIREALNILKEQEEKN, ELVT…ETES, and QLEA…SFEA.

This sequence belongs to the EzrA family.

The protein localises to the cell membrane. Its function is as follows. Negative regulator of FtsZ ring formation; modulates the frequency and position of FtsZ ring formation. Inhibits FtsZ ring formation at polar sites. Interacts either with FtsZ or with one of its binding partners to promote depolymerization. This chain is Septation ring formation regulator EzrA, found in Streptococcus pyogenes serotype M1.